The following is a 623-amino-acid chain: V-type proton ATPase catalytic subunit A (623 aa).

Residue 252 to 259 (GAFGCGKT) coordinates ATP.

The protein belongs to the ATPase alpha/beta chains family. As to quaternary structure, V-ATPase is a heteromultimeric enzyme composed of a peripheral catalytic V1 complex (main components: subunits A, B, C, D, E, and F) attached to an integral membrane V0 proton pore complex (main component: the proteolipid protein).

The enzyme catalyses ATP + H2O + 4 H(+)(in) = ADP + phosphate + 5 H(+)(out). Its function is as follows. Catalytic subunit of the peripheral V1 complex of vacuolar ATPase. V-ATPase vacuolar ATPase is responsible for acidifying a variety of intracellular compartments in eukaryotic cells. This chain is V-type proton ATPase catalytic subunit A, found in Citrus unshiu (Satsuma mandarin).